The primary structure comprises 644 residues: Exoribonuclease 2 (644 aa).

The RNB domain maps to 189-516 (REDLTSLDFV…NHRLLKAVIK (328 aa)). Residues 561 to 643 (GTRFAAEIVD…ETRSIIARPV (83 aa)) enclose the S1 motif domain.

The protein belongs to the RNR ribonuclease family. RNase II subfamily.

The protein localises to the cytoplasm. The catalysed reaction is Exonucleolytic cleavage in the 3'- to 5'-direction to yield nucleoside 5'-phosphates.. Functionally, involved in mRNA degradation. Hydrolyzes single-stranded polyribonucleotides processively in the 3' to 5' direction. This chain is Exoribonuclease 2, found in Shigella flexneri serotype 5b (strain 8401).